The primary structure comprises 514 residues: Na(+)/H(+) antiporter NhaB (514 aa).

12 helical membrane passes run 23-43 (LALLVFLIVNPFIFLANPFVA), 63-83 (PLLPGGLLAIEAVIIGMTSAA), 97-117 (LLLMFMVAGIYFMKQLLLFIF), 120-140 (LLLSIRSKMVLSLAFCVAAAF), 144-164 (FLDALTVVAVVISVAVGFYGI), 202-222 (LMMHAGVGTALGGVMTMVGEP), 238-258 (FFLRMSPVTVPVLVCGLLTCM), 303-323 (AVIGVWLVTALALHLAEVGLI), 357-377 (LTVFFSIVAVIIDQHLFAPII), 391-411 (LFYLFNGLLSSISDNVFVGTI), 447-467 (ATPNGQAAFLFLLTSALAPLI), and 475-495 (VWMALPYTIVLTLIGLLCVEF).

Belongs to the NhaB Na(+)/H(+) (TC 2.A.34) antiporter family.

It localises to the cell inner membrane. It carries out the reaction 2 Na(+)(in) + 3 H(+)(out) = 2 Na(+)(out) + 3 H(+)(in). In terms of biological role, na(+)/H(+) antiporter that extrudes sodium in exchange for external protons. The chain is Na(+)/H(+) antiporter NhaB from Salmonella paratyphi A (strain ATCC 9150 / SARB42).